A 263-amino-acid chain; its full sequence is 2-dehydro-3-deoxyphosphooctonate aldolase (263 aa).

The protein belongs to the KdsA family.

The protein resides in the cytoplasm. The catalysed reaction is D-arabinose 5-phosphate + phosphoenolpyruvate + H2O = 3-deoxy-alpha-D-manno-2-octulosonate-8-phosphate + phosphate. It participates in carbohydrate biosynthesis; 3-deoxy-D-manno-octulosonate biosynthesis; 3-deoxy-D-manno-octulosonate from D-ribulose 5-phosphate: step 2/3. Its pathway is bacterial outer membrane biogenesis; lipopolysaccharide biosynthesis. This is 2-dehydro-3-deoxyphosphooctonate aldolase from Wolinella succinogenes (strain ATCC 29543 / DSM 1740 / CCUG 13145 / JCM 31913 / LMG 7466 / NCTC 11488 / FDC 602W) (Vibrio succinogenes).